Here is a 204-residue protein sequence, read N- to C-terminus: Holliday junction branch migration complex subunit RuvA (204 aa).

A domain I region spans residues 1–64 (MIGRLRGIIL…EDAQLLYGFN (64 aa)). Residues 65 to 142 (NKQERALFRE…KGLNGDLFNN (78 aa)) are domain II. A flexible linker region spans residues 143 to 155 (TGDISLPTASPQT). Residues 156-204 (SDADIEAEAASALVALGYKPQEASRLVSKIAKPGADCETLIRDALRAAL) are domain III.

Belongs to the RuvA family. Homotetramer. Forms an RuvA(8)-RuvB(12)-Holliday junction (HJ) complex. HJ DNA is sandwiched between 2 RuvA tetramers; dsDNA enters through RuvA and exits via RuvB. An RuvB hexamer assembles on each DNA strand where it exits the tetramer. Each RuvB hexamer is contacted by two RuvA subunits (via domain III) on 2 adjacent RuvB subunits; this complex drives branch migration. In the full resolvosome a probable DNA-RuvA(4)-RuvB(12)-RuvC(2) complex forms which resolves the HJ.

It is found in the cytoplasm. Its function is as follows. The RuvA-RuvB-RuvC complex processes Holliday junction (HJ) DNA during genetic recombination and DNA repair, while the RuvA-RuvB complex plays an important role in the rescue of blocked DNA replication forks via replication fork reversal (RFR). RuvA specifically binds to HJ cruciform DNA, conferring on it an open structure. The RuvB hexamer acts as an ATP-dependent pump, pulling dsDNA into and through the RuvAB complex. HJ branch migration allows RuvC to scan DNA until it finds its consensus sequence, where it cleaves and resolves the cruciform DNA. The sequence is that of Holliday junction branch migration complex subunit RuvA from Yersinia pseudotuberculosis serotype O:1b (strain IP 31758).